Consider the following 93-residue polypeptide: Cobalt transport protein CbiN (93 aa).

2 consecutive transmembrane segments (helical) span residues 5-25 and 63-83; these read LMLL…NHGG and LLFT…LGYC.

Belongs to the CbiN family. Forms an energy-coupling factor (ECF) transporter complex composed of an ATP-binding protein (A component, CbiO), a transmembrane protein (T component, CbiQ) and 2 possible substrate-capture proteins (S components, CbiM and CbiN) of unknown stoichimetry.

Its subcellular location is the cell inner membrane. The protein operates within cofactor biosynthesis; adenosylcobalamin biosynthesis. Part of the energy-coupling factor (ECF) transporter complex CbiMNOQ involved in cobalt import. The protein is Cobalt transport protein CbiN of Salmonella arizonae (strain ATCC BAA-731 / CDC346-86 / RSK2980).